The primary structure comprises 218 residues: Cell division protein SepF (218 aa).

The tract at residues 25 to 115 (DVAASTDNVI…IANRREQYQQ (91 aa)) is disordered. The span at 29–43 (STDNVIPRSQQSVRA) shows a compositional bias: polar residues. The segment covering 47 to 63 (PKQEPRNNHVQQDHQAR) has biased composition (basic and acidic residues).

It belongs to the SepF family. In terms of assembly, homodimer. Interacts with FtsZ.

It localises to the cytoplasm. Its function is as follows. Cell division protein that is part of the divisome complex and is recruited early to the Z-ring. Probably stimulates Z-ring formation, perhaps through the cross-linking of FtsZ protofilaments. Its function overlaps with FtsA. In Streptococcus pyogenes serotype M12 (strain MGAS2096), this protein is Cell division protein SepF.